A 177-amino-acid chain; its full sequence is Alkyl hydroperoxide reductase AhpD (177 aa).

Cys-130 (proton donor) is an active-site residue. A disulfide bridge links Cys-130 with Cys-133. Cys-133 serves as the catalytic Cysteine sulfenic acid (-SOH) intermediate.

It belongs to the AhpD family. Homotrimer.

The catalysed reaction is N(6)-[(R)-dihydrolipoyl]-L-lysyl-[lipoyl-carrier protein] + a hydroperoxide = N(6)-[(R)-lipoyl]-L-lysyl-[lipoyl-carrier protein] + an alcohol + H2O. In terms of biological role, antioxidant protein with alkyl hydroperoxidase activity. Required for the reduction of the AhpC active site cysteine residues and for the regeneration of the AhpC enzyme activity. The polypeptide is Alkyl hydroperoxide reductase AhpD (Corynebacterium aurimucosum (strain ATCC 700975 / DSM 44827 / CIP 107346 / CN-1) (Corynebacterium nigricans)).